Consider the following 214-residue polypeptide: Ribonuclease HII (214 aa).

Residues Ser-27–Val-214 form the RNase H type-2 domain. 3 residues coordinate a divalent metal cation: Asp-33, Glu-34, and Asp-126.

Belongs to the RNase HII family. Mn(2+) serves as cofactor. It depends on Mg(2+) as a cofactor.

It localises to the cytoplasm. The enzyme catalyses Endonucleolytic cleavage to 5'-phosphomonoester.. In terms of biological role, endonuclease that specifically degrades the RNA of RNA-DNA hybrids. The protein is Ribonuclease HII (rnhB) of Chlamydia pneumoniae (Chlamydophila pneumoniae).